Reading from the N-terminus, the 106-residue chain is Cell division protein FtsL (106 aa).

The Cytoplasmic segment spans residues 1-22 (MPRQSPPNLAKLIALDLLTVGR). Residues 23-43 (VPLLLLVLIFSCAMGVVFMTH) form a helical membrane-spanning segment. At 44–106 (HTRQAISAKD…SDKEVVINLK (63 aa)) the chain is on the periplasmic side.

It belongs to the FtsL family. In terms of assembly, part of a complex composed of FtsB, FtsL and FtsQ.

The protein resides in the cell inner membrane. Its function is as follows. Essential cell division protein. May link together the upstream cell division proteins, which are predominantly cytoplasmic, with the downstream cell division proteins, which are predominantly periplasmic. This chain is Cell division protein FtsL, found in Vibrio cholerae serotype O1 (strain ATCC 39315 / El Tor Inaba N16961).